Here is a 550-residue protein sequence, read N- to C-terminus: Glutamyl-tRNA(Gln) amidotransferase subunit A, mitochondrial (550 aa).

Catalysis depends on charge relay system residues Lys-79 and Ser-171. The Acyl-ester intermediate role is filled by Ser-195. The interval Glu-371–Asn-390 is disordered.

It belongs to the amidase family. GatA subfamily. As to quaternary structure, subunit of the heterotrimeric GatCAB amidotransferase (AdT) complex, composed of A, B and C subunits.

It localises to the mitochondrion. The enzyme catalyses L-glutamyl-tRNA(Gln) + L-glutamine + ATP + H2O = L-glutaminyl-tRNA(Gln) + L-glutamate + ADP + phosphate + H(+). Functionally, allows the formation of correctly charged Gln-tRNA(Gln) through the transamidation of misacylated Glu-tRNA(Gln) in the mitochondria. The reaction takes place in the presence of glutamine and ATP through an activated gamma-phospho-Glu-tRNA(Gln). This chain is Glutamyl-tRNA(Gln) amidotransferase subunit A, mitochondrial, found in Dictyostelium discoideum (Social amoeba).